The primary structure comprises 281 residues: Diaminopimelate epimerase (281 aa).

Substrate-binding residues include Asn14 and Asn65. Catalysis depends on Cys74, which acts as the Proton donor. Residues 75-76 (GN), Asn165, Asn198, and 216-217 (ER) contribute to the substrate site. Catalysis depends on Cys225, which acts as the Proton acceptor. 226–227 (GT) contributes to the substrate binding site.

It belongs to the diaminopimelate epimerase family. As to quaternary structure, homodimer.

The protein localises to the cytoplasm. The catalysed reaction is (2S,6S)-2,6-diaminopimelate = meso-2,6-diaminopimelate. It participates in amino-acid biosynthesis; L-lysine biosynthesis via DAP pathway; DL-2,6-diaminopimelate from LL-2,6-diaminopimelate: step 1/1. Functionally, catalyzes the stereoinversion of LL-2,6-diaminopimelate (L,L-DAP) to meso-diaminopimelate (meso-DAP), a precursor of L-lysine and an essential component of the bacterial peptidoglycan. This Leptospira borgpetersenii serovar Hardjo-bovis (strain JB197) protein is Diaminopimelate epimerase.